A 253-amino-acid polypeptide reads, in one-letter code: tRNA pseudouridine synthase A (253 aa).

The Nucleophile role is filled by Asp53. Tyr111 contacts substrate.

Belongs to the tRNA pseudouridine synthase TruA family. As to quaternary structure, homodimer.

It catalyses the reaction uridine(38/39/40) in tRNA = pseudouridine(38/39/40) in tRNA. Its function is as follows. Formation of pseudouridine at positions 38, 39 and 40 in the anticodon stem and loop of transfer RNAs. In Oceanobacillus iheyensis (strain DSM 14371 / CIP 107618 / JCM 11309 / KCTC 3954 / HTE831), this protein is tRNA pseudouridine synthase A.